The chain runs to 595 residues: Adenine deaminase 2 (595 aa).

It belongs to the metallo-dependent hydrolases superfamily. Adenine deaminase family. It depends on Mn(2+) as a cofactor.

The enzyme catalyses adenine + H2O + H(+) = hypoxanthine + NH4(+). This is Adenine deaminase 2 from Rhizobium johnstonii (strain DSM 114642 / LMG 32736 / 3841) (Rhizobium leguminosarum bv. viciae).